We begin with the raw amino-acid sequence, 311 residues long: Methionyl-tRNA formyltransferase (311 aa).

Residue 110 to 113 (SLLP) participates in (6S)-5,6,7,8-tetrahydrofolate binding.

This sequence belongs to the Fmt family.

The enzyme catalyses L-methionyl-tRNA(fMet) + (6R)-10-formyltetrahydrofolate = N-formyl-L-methionyl-tRNA(fMet) + (6S)-5,6,7,8-tetrahydrofolate + H(+). Its function is as follows. Attaches a formyl group to the free amino group of methionyl-tRNA(fMet). The formyl group appears to play a dual role in the initiator identity of N-formylmethionyl-tRNA by promoting its recognition by IF2 and preventing the misappropriation of this tRNA by the elongation apparatus. The protein is Methionyl-tRNA formyltransferase of Streptococcus pyogenes serotype M3 (strain ATCC BAA-595 / MGAS315).